We begin with the raw amino-acid sequence, 215 residues long: Cytochrome b6 (215 aa).

A helical transmembrane segment spans residues I32–F52. C35 contacts heme c. Residues H86 and H100 each contribute to the heme b site. A run of 3 helical transmembrane segments spans residues A90–F110, L116–Y136, and L186–I206. Heme b is bound by residues H187 and H202.

Belongs to the cytochrome b family. PetB subfamily. The 4 large subunits of the cytochrome b6-f complex are cytochrome b6, subunit IV (17 kDa polypeptide, PetD), cytochrome f and the Rieske protein, while the 4 small subunits are PetG, PetL, PetM and PetN. The complex functions as a dimer. Requires heme b as cofactor. It depends on heme c as a cofactor.

The protein resides in the plastid. It is found in the chloroplast thylakoid membrane. Its function is as follows. Component of the cytochrome b6-f complex, which mediates electron transfer between photosystem II (PSII) and photosystem I (PSI), cyclic electron flow around PSI, and state transitions. The protein is Cytochrome b6 of Pinus thunbergii (Japanese black pine).